A 77-amino-acid polypeptide reads, in one-letter code: Blood-induced peptide 1 (77 aa).

The stretch at 38 to 71 (EDFLHQENSELKKSLKNLEMENEKLKNILKTDYN) forms a coiled coil.

In terms of biological role, plays an important role in survival in host blood through increasing tolerance to stresses such as heat, salt, or cycloheximide, which is essential for virulence. The protein is Blood-induced peptide 1 of Candida albicans (strain SC5314 / ATCC MYA-2876) (Yeast).